The following is a 262-amino-acid chain: Intron-encoded DNA endonuclease ai2b (262 aa).

The protein belongs to the LAGLIDADG endonuclease family.

It localises to the mitochondrion. Functionally, mitochondrial DNA endonuclease involved in intron homing. The chain is Intron-encoded DNA endonuclease ai2b (ai2b) from Dictyostelium discoideum (Social amoeba).